Consider the following 305-residue polypeptide: HPr kinase/phosphorylase (305 aa).

Active-site residues include H138 and K159. Position 153–160 (153–160) interacts with ATP; the sequence is GESGIGKS. Residue S160 coordinates Mg(2+). Residue D177 is the Proton acceptor; for phosphorylation activity. Proton donor; for dephosphorylation activity of the active site. Positions 201–210 are important for the catalytic mechanism of both phosphorylation and dephosphorylation; it reads IEIRGIGILD. A Mg(2+)-binding site is contributed by E202. The active site involves R243. An important for the catalytic mechanism of dephosphorylation region spans residues 264–269; the sequence is PVRPGR.

Belongs to the HPrK/P family. In terms of assembly, homohexamer. Mg(2+) serves as cofactor.

It catalyses the reaction [HPr protein]-L-serine + ATP = [HPr protein]-O-phospho-L-serine + ADP + H(+). It carries out the reaction [HPr protein]-O-phospho-L-serine + phosphate + H(+) = [HPr protein]-L-serine + diphosphate. Catalyzes the ATP- as well as the pyrophosphate-dependent phosphorylation of a specific serine residue in HPr, a phosphocarrier protein of the phosphoenolpyruvate-dependent sugar phosphotransferase system (PTS). HprK/P also catalyzes the pyrophosphate-producing, inorganic phosphate-dependent dephosphorylation (phosphorolysis) of seryl-phosphorylated HPr (P-Ser-HPr). The two antagonistic activities of HprK/P are regulated by several intracellular metabolites, which change their concentration in response to the absence or presence of rapidly metabolisable carbon sources (glucose, fructose, etc.) in the growth medium. Therefore, by controlling the phosphorylation state of HPr, HPrK/P is a sensor enzyme that plays a major role in the regulation of carbon metabolism and sugar transport: it mediates carbon catabolite repression (CCR), and regulates PTS-catalyzed carbohydrate uptake and inducer exclusion. The chain is HPr kinase/phosphorylase from Thermoanaerobacter pseudethanolicus (strain ATCC 33223 / 39E) (Clostridium thermohydrosulfuricum).